Consider the following 360-residue polypeptide: Phospho-N-acetylmuramoyl-pentapeptide-transferase (360 aa).

10 helical membrane passes run isoleucine 27 to tryptophan 47, proline 72 to tyrosine 92, serine 94 to isoleucine 114, tryptophan 132 to glycine 152, isoleucine 168 to serine 188, glycine 199 to threonine 219, alanine 236 to phenylalanine 256, valine 263 to leucine 283, phenylalanine 288 to valine 308, and valine 338 to lysine 358.

This sequence belongs to the glycosyltransferase 4 family. MraY subfamily. The cofactor is Mg(2+).

It localises to the cell inner membrane. The catalysed reaction is UDP-N-acetyl-alpha-D-muramoyl-L-alanyl-gamma-D-glutamyl-meso-2,6-diaminopimeloyl-D-alanyl-D-alanine + di-trans,octa-cis-undecaprenyl phosphate = di-trans,octa-cis-undecaprenyl diphospho-N-acetyl-alpha-D-muramoyl-L-alanyl-D-glutamyl-meso-2,6-diaminopimeloyl-D-alanyl-D-alanine + UMP. The protein operates within cell wall biogenesis; peptidoglycan biosynthesis. Its function is as follows. Catalyzes the initial step of the lipid cycle reactions in the biosynthesis of the cell wall peptidoglycan: transfers peptidoglycan precursor phospho-MurNAc-pentapeptide from UDP-MurNAc-pentapeptide onto the lipid carrier undecaprenyl phosphate, yielding undecaprenyl-pyrophosphoryl-MurNAc-pentapeptide, known as lipid I. The sequence is that of Phospho-N-acetylmuramoyl-pentapeptide-transferase from Yersinia pestis bv. Antiqua (strain Angola).